The primary structure comprises 99 residues: DNA-binding protein HU (99 aa).

The tract at residues 67–86 (REGRNPKTGAKMKIDAYNQP) is disordered.

Belongs to the bacterial histone-like protein family. As to quaternary structure, homodimer.

Its function is as follows. Histone-like DNA-binding protein which is capable of wrapping DNA to stabilize it, and thus to prevent its denaturation under extreme environmental conditions. The chain is DNA-binding protein HU (hup) from Rickettsia conorii (strain ATCC VR-613 / Malish 7).